The following is a 1888-amino-acid chain: MSFNQSRSDKNEGYTQYRKSGRSNNFNPQRGSSGTHSKPGGAGGSAPTSSIASNRSFKKTNNAQGGQSRGGLPAVNSTDSSNAPNPRGVQNGAVAKPPEGPHSQRSTRDVPKAPTSQSAPLSSDGPAPTTPAKGTGDQPKEFAFQFGSISPGFMNGMQLPVRTSSAPPNLDEQKRDQARHESFRPVPPMPIPLAPKPQTQRKDTGAGDQPNVGQQLQQKDTGIINQPNTGDAHTVQKAKKDMQASPNHPTNQTQKPTTPMSGISMTMPYHPPQVPVPFGGPNQQMQSQGLTPTSLHMSIPVPLQIGSSPQVQQPMFVPGLHPHPMQPQGIIHQGQGLGFATQIGSQLPPQLSNLGMNVTSQYPQQQGGKFGGPRKSAVRITDPKTHEELIFDNKQSNAYADTGTSGPRPPYNLPSQTQPLPYAPSHAMNYYPNSYNPNPLYFASPSSLPLPSGQSAPNSQPHRFNYPVSQGSQNVPYIDMHVKKPSGGPMHGISDPPNREHTRDTHTFQPPAPSGTVHVTIKMPTDPTGGKGSDTLPNKLPTTEEGKSQKPSSPSVDLIPPSQRAVDTTSESSLHDSKLGREPSGIKSSPVISKQFTDGPPMVSLESQDSSSVQSSLTASSEESELAVAHSEVRRENLLGSDLHKDHQKKTSKKGYAQSLQHQISGQASSALGVPCQVQDTTSPLVSEAVEAKSLIIPAVVGGKSVSVSAVTSDPLESKDAGLVSVAHSSSPENPGLGNVKNLDLISDDNQDTSSKEKNSEPVVLKIEEQGQATFSEPPVDLKNSENVLDHDVSKSVEVAEKTERNLIVSSATVSNEVLTSETAQRAVDEPVSCNAEADVSASVSSSSTVPENSQDDKLVVDSSGRYDNMSSNEVLKNVVKSDQPSEPALNPGLSEGKNDGEVLDTVGTCANSSQGVSGTKDKSVVETSRVKGTTGKAKKRLKAILQMADAAGTTSDLYNAYKRPEEKKETVAHSESIERTESRSSSVDTEQESNEAIKEDAGALSKAEPDDWEDAADIATPDLESANGDGVGTSMLDSGDRTGDMAKKYSRDFLLKFAEQFLDLPHNFEVTSDIESLMSTHTNVSHHHDRDPYPSPGRVDRPSSGGSRLDRRGSNLVDDDRWSKLPGPFAPGQDPRLDLAYGATAGFRPGQGPNFGVLRNPRAQAPVQYAGGILAGPMQSMGPQGGLQRNNSDADRWQRATNFQKGLIPSPLTPLQTMHKAKKKYEVGKVSDEEETKQRQLKAILNKLTPQNFEKLFEQVKAVNIDNGRTLTGVISQIFDKALMEPTFCEMYANFCFHLAGELPDLSEDNEKITFKRLLLNKCQEEFERGEREQEEANKVEEEGEVKQSEEEREEKRIKARRRMLGNIRLIGELYKKKMLTERIMHECIKKLLGEYQNPDEEDVEALCKLMSTIGEMIDHPRAKDYMDSYFEIMTMLSNNMKLSSRVRFMLKDAIDLRKNKWQQRRKVEGPKKIEEVHRDAAQERQAQTGRFGRGPSINSSARRGGPPMDYGPRGSVVSSPGNQMGGFRAFLHQPRGYGGNQDARQDERQSYEARTLSVTSQRAGGDESITLGPQGGLARGMSIRGPQPSSAAPADMSPLPGDLRSAPIASLNGYSSASERATLTSKEDLISRHMPERFAGPTSMDHISSPERYSNYGNKDLRHSGRSFDRSRPISPATPPGPALTPSLPSEKVLSEDRLQQLSLTAIKEFYSARDEKEVALCIKELNSPAFHPTMISLWVTDVFERTNLERDLLAKLVVNLSRPNNGTLNQAHLVKGFEAVLGNLEDSVNDAPRAPEYLGQILGKVITESMVSLREVADLICQGGEVPGNLLQSGLGADVLGNILKTIKTEKGEGFLTDLRTNSNLRLETFLPPDPVKSRVLEEFI.

Disordered stretches follow at residues 1 to 259, 391 to 420, 449 to 662, 726 to 761, 838 to 903, 961 to 1042, 1083 to 1138, 1331 to 1356, 1462 to 1605, and 1639 to 1691; these read MSFN…PTTP, FDNKQSNAYADTGTSGPRPPYNLPSQTQPL, PLPS…SLQH, VAHSSSPENPGLGNVKNLDLISDDNQDTSSKEKNSE, ADVS…DGEV, AYKR…SGDR, TNVS…DPRL, GEREQEEANKVEEEGEVKQSEEEREE, KWQQ…PGDL, and RFAG…PSLP. 2 stretches are compositionally biased toward polar residues: residues 13–36 and 75–84; these read GYTQYRKSGRSNNFNPQRGSSGTH and VNSTDSSNAP. The segment covering 171-183 has biased composition (basic and acidic residues); sequence DEQKRDQARHESF. Residues 185-195 show a composition bias toward pro residues; sequence PVPPMPIPLAP. Composition is skewed to polar residues over residues 211–231, 244–259, 393–405, and 458–475; these read NVGQQLQQKDTGIINQPNTGD, ASPNHPTNQTQKPTTP, NKQSNAYADTGTS, and NSQPHRFNYPVSQGSQNV. The span at 497 to 506 shows a compositional bias: basic and acidic residues; that stretch reads PNREHTRDTH. Residues 586–596 are compositionally biased toward polar residues; that stretch reads IKSSPVISKQF. The span at 603-630 shows a compositional bias: low complexity; that stretch reads VSLESQDSSSVQSSLTASSEESELAVAH. Residues 631 to 645 are compositionally biased toward basic and acidic residues; it reads SEVRRENLLGSDLHK. The segment covering 840-850 has biased composition (low complexity); that stretch reads VSASVSSSSTV. Positions 869-885 are enriched in polar residues; the sequence is NMSSNEVLKNVVKSDQP. A compositionally biased stretch (basic and acidic residues) spans 963 to 983; it reads KRPEEKKETVAHSESIERTES. The interval 1048 to 1093 is EIF4E-binding; that stretch reads KKYSRDFLLKFAEQFLDLPHNFEVTSDIESLMSTHTNVSHHHDRDP. Basic and acidic residues predominate over residues 1109–1124; the sequence is RLDRRGSNLVDDDRWS. The MIF4G domain maps to 1239-1462; it reads QRQLKAILNK…KDAIDLRKNK (224 aa). 2 stretches are compositionally biased toward basic and acidic residues: residues 1467 to 1484 and 1661 to 1674; these read RKVEGPKKIEEVHRDAAQ and KDLRHSGRSFDRSR. The 125-residue stretch at 1700-1824 folds into the MI domain; it reads RLQQLSLTAI…SLREVADLIC (125 aa).

This sequence belongs to the eukaryotic initiation factor 4G family. In terms of assembly, EIF4F is a multi-subunit complex, the composition of which varies with external and internal environmental conditions. It is composed of at least EIF4A, EIF4E and EIF4G. Interacts directly with eIF4E. In higher plants two isoforms of EIF4F have been identified, named isoform EIF4F and isoform EIF(iso)4F. Isoform EIF4F has subunits p220 and p26, whereas isoform EIF(iso)4F has subunits p82 and p28.

Its function is as follows. Component of the protein complex eIF4F, which is involved in the recognition of the mRNA cap, ATP-dependent unwinding of 5'-terminal secondary structure and recruitment of mRNA to the ribosome. This Cucumis melo (Muskmelon) protein is Eukaryotic translation initiation factor 4G.